Here is a 109-residue protein sequence, read N- to C-terminus: Cyclic di-AMP receptor A (109 aa).

3',3'-c-di-AMP-binding residues include Thr21, Phe25, Thr28, Gly35, Phe36, Leu37, Asn41, Gly47, Glu92, and Gly94.

Homotrimer.

The protein resides in the cytoplasm. Functionally, binds cyclic di-AMP (c-di-AMP) and is probably involved in c-di-AMP-mediated signaling pathways. In vitro, can also bind cyclic GMP-AMP (3'3'-cGAMP), with lower affinity, but not c-di-GMP or 2'3'-cGAMP. The sequence is that of Cyclic di-AMP receptor A from Bacillus subtilis (strain 168).